A 255-amino-acid polypeptide reads, in one-letter code: Triosephosphate isomerase (255 aa).

9–11 is a substrate binding site; that stretch reads NWK. Residue H96 is the Electrophile of the active site. Catalysis depends on E170, which acts as the Proton acceptor. Substrate contacts are provided by residues G176, S216, and 237 to 238; that span reads GG.

It belongs to the triosephosphate isomerase family. In terms of assembly, homodimer.

Its subcellular location is the cytoplasm. It carries out the reaction D-glyceraldehyde 3-phosphate = dihydroxyacetone phosphate. It functions in the pathway carbohydrate biosynthesis; gluconeogenesis. Its pathway is carbohydrate degradation; glycolysis; D-glyceraldehyde 3-phosphate from glycerone phosphate: step 1/1. Involved in the gluconeogenesis. Catalyzes stereospecifically the conversion of dihydroxyacetone phosphate (DHAP) to D-glyceraldehyde-3-phosphate (G3P). In Magnetococcus marinus (strain ATCC BAA-1437 / JCM 17883 / MC-1), this protein is Triosephosphate isomerase.